The sequence spans 153 residues: Superoxide dismutase [Cu-Zn] (153 aa).

Residues H45, H47, and H62 each contribute to the Cu cation site. C56 and C145 are joined by a disulfide. Zn(2+) is bound by residues H62, H70, H79, and D82. H119 serves as a coordination point for Cu cation.

The protein belongs to the Cu-Zn superoxide dismutase family. As to quaternary structure, homodimer. Cu cation is required as a cofactor. Zn(2+) serves as cofactor.

The protein resides in the cytoplasm. It carries out the reaction 2 superoxide + 2 H(+) = H2O2 + O2. Destroys radicals which are normally produced within the cells and which are toxic to biological systems. The sequence is that of Superoxide dismutase [Cu-Zn] from Drosophila orena (Fruit fly).